Reading from the N-terminus, the 98-residue chain is Integration host factor subunit alpha (98 aa).

The segment covering 53-69 has biased composition (basic and acidic residues); that stretch reads DLREKSERPGRNPKTGE. The interval 53 to 73 is disordered; it reads DLREKSERPGRNPKTGEDIPI.

Belongs to the bacterial histone-like protein family. Heterodimer of an alpha and a beta chain.

Functionally, this protein is one of the two subunits of integration host factor, a specific DNA-binding protein that functions in genetic recombination as well as in transcriptional and translational control. The sequence is that of Integration host factor subunit alpha from Aliivibrio salmonicida (strain LFI1238) (Vibrio salmonicida (strain LFI1238)).